We begin with the raw amino-acid sequence, 393 residues long: SET domain-containing protein DDB_G0283443 (393 aa).

An SET domain is found at 17–312 (KKIEINETLE…KGDELSISYI (296 aa)).

This sequence belongs to the class V-like SAM-binding methyltransferase superfamily.

Its function is as follows. Probable methyltransferase. In Dictyostelium discoideum (Social amoeba), this protein is SET domain-containing protein DDB_G0283443.